We begin with the raw amino-acid sequence, 777 residues long: Serine/threonine-protein kinase PLK4 (777 aa).

Residues Y14–L268 enclose the Protein kinase domain. ATP is bound by residues L20–V28 and K43. D139 serves as the catalytic Proton acceptor. The span at T371–S381 shows a compositional bias: polar residues. Residues T371–E390 are disordered. The region spanning E390–K507 is the Cryptic POLO box 1 (CPB1) domain. The Cryptic POLO box 2 (CPB2) domain occupies T508–A611. A POLO box domain is found at P669–C748.

It belongs to the protein kinase superfamily. Ser/Thr protein kinase family. CDC5/Polo subfamily. As to quaternary structure, homodimer. In terms of processing, ubiquitinated by the SCF(Slimb) ubiquitin ligase complex; leading to its degradation by the proteasome during interphase and regulating centriole number and ensuring the block to centriole reduplication.

It is found in the cytoplasm. The protein resides in the cytoskeleton. It localises to the microtubule organizing center. The protein localises to the centrosome. Its subcellular location is the centriole. The catalysed reaction is L-seryl-[protein] + ATP = O-phospho-L-seryl-[protein] + ADP + H(+). It carries out the reaction L-threonyl-[protein] + ATP = O-phospho-L-threonyl-[protein] + ADP + H(+). In terms of biological role, serine/threonine-protein kinase that plays a central role in centriole duplication. Able to trigger procentriole formation on the surface of the mother centriole cylinder, using mother centriole as a platform, leading to the recruitment of centriole biogenesis proteins such as sas-6. When overexpressed, it is able to induce centrosome amplification through the simultaneous generation of multiple procentrioles adjoining each parental centriole during S phase. Centrosome amplification following overexpression can initiate tumorigenesis, highlighting the importance of centrosome regulation in cancers. In Drosophila persimilis (Fruit fly), this protein is Serine/threonine-protein kinase PLK4 (SAK).